The primary structure comprises 44 residues: Protein PsbN (44 aa).

Residues 6–26 traverse the membrane as a helical segment; it reads FFFTFFLWFLLLSVTGYSVYV.

It belongs to the PsbN family.

It is found in the plastid. It localises to the chloroplast thylakoid membrane. Its function is as follows. May play a role in photosystem I and II biogenesis. This is Protein PsbN from Chlamydomonas reinhardtii (Chlamydomonas smithii).